The sequence spans 509 residues: Dihydrolipoyl dehydrogenase, mitochondrial (509 aa).

A mitochondrion-targeting transit peptide spans 1–35 (MQSWSRVYCSLAKRGHFNRISHGLQGLSAVPLRTY). Lys-66 bears the N6-acetyllysine; alternate mark. Lys-66 carries the N6-succinyllysine; alternate modification. FAD is bound by residues 71 to 80 (EKNETLGGTC) and Lys-89. Cys-80 and Cys-85 are joined by a disulfide. Residues Lys-104, Lys-122, Lys-132, and Lys-143 each carry the N6-acetyllysine; alternate modification. Residues Lys-104, Lys-122, Lys-132, and Lys-143 each carry the N6-succinyllysine; alternate modification. Gly-154 contributes to the FAD binding site. 2 positions are modified to N6-succinyllysine: Lys-159 and Lys-166. Residue 183-185 (TGS) coordinates FAD. Residues 220–227 (GAGVIGVE) and Glu-243 each bind NAD(+). Lys-273 and Lys-277 each carry N6-succinyllysine. Val-278 is an NAD(+) binding site. Ser-285 and Ser-297 each carry phosphoserine. Gly-314 serves as a coordination point for NAD(+). Lys-346 is subject to N6-acetyllysine. FAD contacts are provided by residues Asp-355 and 361–364 (MLAH). N6-acetyllysine; alternate is present on Lys-410. At Lys-410 the chain carries N6-succinyllysine; alternate. N6-acetyllysine is present on residues Lys-417 and Lys-420. An N6-succinyllysine modification is found at Lys-430. Residue His-487 is the Proton acceptor of the active site. Ser-502 is modified (phosphoserine). The residue at position 505 (Lys-505) is an N6-acetyllysine; alternate. Lys-505 is modified (N6-succinyllysine; alternate).

This sequence belongs to the class-I pyridine nucleotide-disulfide oxidoreductase family. Homodimer. Part of the multimeric pyruvate dehydrogenase complex that contains multiple copies of pyruvate dehydrogenase (subunits PDHA (PDHA1 or PDHA2) and PDHB, E1), dihydrolipoamide acetyltransferase (DLAT, E2) and lipoamide dehydrogenase (DLD, E3). These subunits are bound to an inner core composed of about 48 DLAT and 12 PDHX molecules (by non covalent bonds). The 2-oxoglutarate dehydrogenase complex is composed of OGDH (2-oxoglutarate dehydrogenase; E1), DLST (dihydrolipoamide succinyltransferase; E2), DLD (dihydrolipoamide dehydrogenase; E3) and the assembly factor KGD4. It contains multiple copies of the three enzymatic components (E1, E2 and E3). In the nucleus, the 2-oxoglutarate dehydrogenase complex associates with KAT2A. Interacts with PDHX. It depends on FAD as a cofactor. Post-translationally, tyrosine phosphorylated.

Its subcellular location is the mitochondrion matrix. The protein resides in the nucleus. It is found in the cell projection. The protein localises to the cilium. It localises to the flagellum. Its subcellular location is the cytoplasmic vesicle. The protein resides in the secretory vesicle. It is found in the acrosome. The catalysed reaction is N(6)-[(R)-dihydrolipoyl]-L-lysyl-[protein] + NAD(+) = N(6)-[(R)-lipoyl]-L-lysyl-[protein] + NADH + H(+). Functionally, lipoamide dehydrogenase is a component of the glycine cleavage system as well as an E3 component of three alpha-ketoacid dehydrogenase complexes (pyruvate-, alpha-ketoglutarate-, and branched-chain amino acid-dehydrogenase complex). The 2-oxoglutarate dehydrogenase complex is mainly active in the mitochondrion. A fraction of the 2-oxoglutarate dehydrogenase complex also localizes in the nucleus and is required for lysine succinylation of histones: associates with KAT2A on chromatin and provides succinyl-CoA to histone succinyltransferase KAT2A. In monomeric form may have additional moonlighting function as serine protease. Involved in the hyperactivation of spermatazoa during capacitation and in the spermatazoal acrosome reaction. In Pongo abelii (Sumatran orangutan), this protein is Dihydrolipoyl dehydrogenase, mitochondrial (DLD).